We begin with the raw amino-acid sequence, 51 residues long: uncharacterized protein (51 aa).

This is an uncharacterized protein from Grapevine leafroll-associated virus 3 (isolate United States/NY1) (GLRaV-3).